The following is a 293-amino-acid chain: DOMON domain-containing protein FRRS1L (293 aa).

The first 28 residues, 1–28, serve as a signal peptide directing secretion; sequence MARPPRQHPGVWASLLLLLLTGPAACAA. The tract at residues 29-61 is disordered; it reads SPADDGAGPGGRGPRGRARGDTGADEAVPRHDS. Residues 46–61 show a composition bias toward basic and acidic residues; the sequence is ARGDTGADEAVPRHDS. Residues 119–234 enclose the DOMON domain; it reads CDYFLSYRMI…WYYLFAWGPA (116 aa). A helical membrane pass occupies residues 271 to 291; it reads TFSSPFCLLLIVALTFYLLMG.

In terms of assembly, component of the outer core of AMPAR complex. AMPAR complex consists of an inner core made of 4 pore-forming GluA/GRIA proteins (GRIA1, GRIA2, GRIA3 and GRIA4) and 4 major auxiliary subunits arranged in a twofold symmetry. One of the two pairs of distinct binding sites is occupied either by CNIH2, CNIH3 or CACNG2, CACNG3. The other harbors CACNG2, CACNG3, CACNG4, CACNG8 or GSG1L. This inner core of AMPAR complex is complemented by outer core constituents binding directly to the GluA/GRIA proteins at sites distinct from the interaction sites of the inner core constituents. Outer core constituents include at least PRRT1, PRRT2, CKAMP44/SHISA9, FRRS1L and NRN1. The proteins of the inner and outer core serve as a platform for other, more peripherally associated AMPAR constituents. Alone or in combination, these auxiliary subunits control the gating and pharmacology of the AMPAR complex and profoundly impact their biogenesis and protein processing. As to expression, expressed in adult and fetal brain. Very weak expression in medulla, spinal cord and in adult ovary.

It is found in the cell membrane. Its subcellular location is the synapse. Functionally, important modulator of glutamate signaling pathway. The polypeptide is DOMON domain-containing protein FRRS1L (FRRS1L) (Homo sapiens (Human)).